The chain runs to 277 residues: Formamidopyrimidine-DNA glycosylase (277 aa).

Catalysis depends on proline 2, which acts as the Schiff-base intermediate with DNA. The active-site Proton donor is the glutamate 3. Lysine 58 functions as the Proton donor; for beta-elimination activity in the catalytic mechanism. The DNA site is built by histidine 94, arginine 113, and arginine 156. An FPG-type zinc finger spans residues 241–277 (LVYGREGVPCPNCGAEHPIQRITQAGRSTFFCPTCQK). The Proton donor; for delta-elimination activity role is filled by arginine 267.

This sequence belongs to the FPG family. Monomer. It depends on Zn(2+) as a cofactor.

The enzyme catalyses Hydrolysis of DNA containing ring-opened 7-methylguanine residues, releasing 2,6-diamino-4-hydroxy-5-(N-methyl)formamidopyrimidine.. The catalysed reaction is 2'-deoxyribonucleotide-(2'-deoxyribose 5'-phosphate)-2'-deoxyribonucleotide-DNA = a 3'-end 2'-deoxyribonucleotide-(2,3-dehydro-2,3-deoxyribose 5'-phosphate)-DNA + a 5'-end 5'-phospho-2'-deoxyribonucleoside-DNA + H(+). In terms of biological role, involved in base excision repair of DNA damaged by oxidation or by mutagenic agents. Acts as a DNA glycosylase that recognizes and removes damaged bases. Has a preference for oxidized purines, such as 7,8-dihydro-8-oxoguanine (8-oxoG). Has AP (apurinic/apyrimidinic) lyase activity and introduces nicks in the DNA strand. Cleaves the DNA backbone by beta-delta elimination to generate a single-strand break at the site of the removed base with both 3'- and 5'-phosphates. This chain is Formamidopyrimidine-DNA glycosylase, found in Gluconobacter oxydans (strain 621H) (Gluconobacter suboxydans).